Consider the following 345-residue polypeptide: Neuropeptide receptor 15 (345 aa).

Residues 1–11 lie on the Extracellular side of the membrane; sequence MSVAVGIPYVC. Residues 12-32 form a helical membrane-spanning segment; that stretch reads FFIILSVVGIIGNVIVIYAIA. Topologically, residues 33 to 40 are cytoplasmic; that stretch reads GDRNMRKS. The helical transmembrane segment at 41 to 61 threads the bilayer; it reads VMNILLLNLAVADLANLIFTI. Residues 62 to 90 lie on the Extracellular side of the membrane; the sequence is PEWIPPVFFGSTDWLFPSFLCPVCRYLEC. Cys-82 and Cys-171 form a disulfide bridge. A helical membrane pass occupies residues 91-111; that stretch reads VFLFASISTQMIVCIERYIAI. The Cytoplasmic segment spans residues 112–125; that stretch reads VLPMQARQLCSRRN. The chain crosses the membrane as a helical span at residues 126 to 146; sequence VLITVLVDWIFVACFASPYAV. Over 147 to 187 the chain is Extracellular; sequence WHSVKTKDRNTNSLRFKLFQLSATCSNTVGKSTWWQGYKLT. The helical transmembrane segment at 188–208 threads the bilayer; sequence EFLAFYFVPCFIITVVYTKVA. Residues 209-246 are Cytoplasmic-facing; that stretch reads KCLWCKDPTLQCETRSCLDNKSSSRSSDALRTRRNVVK. A helical membrane pass occupies residues 247–267; that stretch reads MLIACVAVYFVCYSPIQVIFL. At 268 to 281 the chain is on the extracellular side; sequence SKAVLNVTIHPPYD. A helical membrane pass occupies residues 282-304; the sequence is FILLMNALAMTCSASNPLLYTLF. Residues 305–345 lie on the Cytoplasmic side of the membrane; sequence SQKFRRRLRDVLYCPSDVENETKTYYSINNTSIVGPRASFN.

This sequence belongs to the G-protein coupled receptor 1 family. As to expression, expressed in pharyngeal muscle and AWC, ASG, ASE, ASI, and ASJ sensory neurons. Expressed in ASI neuron. Expressed in AFD neurons and in AVK interneuron.

It localises to the cell membrane. In terms of biological role, probable receptor for neuropeptide ligand nlp-8 that plays a role in octopamine signaling and specifically, the octopamine inhibition of aversion responses in olfactory sensory neurons. Plays a crucial role in daf-7 expression. Acts in concert with gpa-4 to activate TGF-beta-like daf-7 secretion in the ASI neuron, thereby promoting larval development and inhibition of dauer diapause. Suppresses immune response against pathogenic infection by inhibiting transcription regulators elt-2 and hlh-30 in ASJ neuron. Promotes pathogen avoidance behavior via intestinal gon-2, independent of aerotaxis. This chain is Neuropeptide receptor 15 (npr-15), found in Caenorhabditis elegans.